The primary structure comprises 2073 residues: Fatty acid synthase subunit beta (2073 aa).

The segment at 1–459 (MVEAEQVHQS…VYSTDDAGDL (459 aa)) is acetyltransferase. Residue S270 is the For acetyltransferase activity of the active site. An enoyl reductase region spans residues 470–858 (ALAVMITEKV…TRGIMFWKEL (389 aa)). The residue at position 1122 (S1122) is a Phosphoserine. A dehydratase region spans residues 1155–1644 (GPEYTWFRAI…LPNTELITKL (490 aa)). H1361 (for dehydratase activity) is an active-site residue. Positions 1558–1667 (PVFVTPPTNS…VEVLNQETSE (110 aa)) constitute a MaoC-like domain. A malonyl/palmitoyl transferase region spans residues 1645-2073 (SHTGMINGRK…LQNWDEYESS (429 aa)). Catalysis depends on S1828, which acts as the For malonyltransferase activity. At S2073 the chain carries Phosphoserine.

Belongs to the fungal fatty acid synthetase subunit beta family. [Alpha(6)beta(6)] hexamers of two multifunctional subunits (alpha and beta).

The enzyme catalyses acetyl-CoA + n malonyl-CoA + 2n NADPH + 4n H(+) = a long-chain-acyl-CoA + n CoA + n CO2 + 2n NADP(+).. It carries out the reaction holo-[ACP] + acetyl-CoA = acetyl-[ACP] + CoA. The catalysed reaction is holo-[ACP] + malonyl-CoA = malonyl-[ACP] + CoA. It catalyses the reaction a (3R)-hydroxyacyl-[ACP] = a (2E)-enoyl-[ACP] + H2O. The enzyme catalyses a 2,3-saturated acyl-[ACP] + NAD(+) = a (2E)-enoyl-[ACP] + NADH + H(+). It carries out the reaction (9Z)-octadecenoyl-[ACP] + H2O = (9Z)-octadecenoate + holo-[ACP] + H(+). Functionally, fatty acid synthetase catalyzes the formation of long-chain fatty acids from acetyl-CoA, malonyl-CoA and NADPH. The beta subunit contains domains for: [acyl-carrier-protein] acetyltransferase and malonyltransferase, S-acyl fatty acid synthase thioesterase, enoyl-[acyl-carrier-protein] reductase, and 3-hydroxypalmitoyl-[acyl-carrier-protein] dehydratase. In Schizosaccharomyces pombe (strain 972 / ATCC 24843) (Fission yeast), this protein is Fatty acid synthase subunit beta (fas1).